The chain runs to 514 residues: 2-isopropylmalate synthase (514 aa).

The Pyruvate carboxyltransferase domain occupies 5 to 267 (LIIFDTTLRD…HTDIETREIV (263 aa)). Mn(2+) is bound by residues aspartate 14, histidine 202, histidine 204, and asparagine 238. The segment at 393 to 514 (KLVALRVCSE…QRTHPQVGDV (122 aa)) is regulatory domain.

This sequence belongs to the alpha-IPM synthase/homocitrate synthase family. LeuA type 1 subfamily. Homodimer. Requires Mn(2+) as cofactor.

It is found in the cytoplasm. The enzyme catalyses 3-methyl-2-oxobutanoate + acetyl-CoA + H2O = (2S)-2-isopropylmalate + CoA + H(+). It functions in the pathway amino-acid biosynthesis; L-leucine biosynthesis; L-leucine from 3-methyl-2-oxobutanoate: step 1/4. Its function is as follows. Catalyzes the condensation of the acetyl group of acetyl-CoA with 3-methyl-2-oxobutanoate (2-ketoisovalerate) to form 3-carboxy-3-hydroxy-4-methylpentanoate (2-isopropylmalate). The polypeptide is 2-isopropylmalate synthase (Methylococcus capsulatus (strain ATCC 33009 / NCIMB 11132 / Bath)).